A 500-amino-acid polypeptide reads, in one-letter code: uncharacterized protein (500 aa).

Residues Met1–Ile13 show a composition bias toward low complexity. The disordered stretch occupies residues Met1–Arg23. Position 9 is a phosphoserine (Ser9). The next 12 membrane-spanning stretches (helical) occupy residues Val87 to Leu107, Leu126 to Ala146, Leu156 to Cys176, Trp183 to Tyr203, Met225 to Ala245, Val261 to Phe281, Phe312 to Gln332, Gly351 to Leu371, Ile380 to Ala400, Val408 to Ile428, Ile445 to Ile465, and Val471 to Met491.

Belongs to the major facilitator superfamily.

The protein resides in the golgi apparatus. The protein localises to the membrane. This is an uncharacterized protein from Schizosaccharomyces pombe (strain 972 / ATCC 24843) (Fission yeast).